Here is a 399-residue protein sequence, read N- to C-terminus: 1-deoxy-D-xylulose 5-phosphate reductoisomerase (399 aa).

T13, G14, S15, I16, and N127 together coordinate NADPH. K128 lines the 1-deoxy-D-xylulose 5-phosphate pocket. E129 is a binding site for NADPH. A Mn(2+)-binding site is contributed by D153. 1-deoxy-D-xylulose 5-phosphate is bound by residues S154, E155, S187, and H210. Residue E155 coordinates Mn(2+). G216 provides a ligand contact to NADPH. 1-deoxy-D-xylulose 5-phosphate contacts are provided by S223, N228, K229, and E232. E232 serves as a coordination point for Mn(2+).

This sequence belongs to the DXR family. Mg(2+) is required as a cofactor. Mn(2+) serves as cofactor.

The enzyme catalyses 2-C-methyl-D-erythritol 4-phosphate + NADP(+) = 1-deoxy-D-xylulose 5-phosphate + NADPH + H(+). Its pathway is isoprenoid biosynthesis; isopentenyl diphosphate biosynthesis via DXP pathway; isopentenyl diphosphate from 1-deoxy-D-xylulose 5-phosphate: step 1/6. Catalyzes the NADPH-dependent rearrangement and reduction of 1-deoxy-D-xylulose-5-phosphate (DXP) to 2-C-methyl-D-erythritol 4-phosphate (MEP). This chain is 1-deoxy-D-xylulose 5-phosphate reductoisomerase, found in Bordetella pertussis (strain Tohama I / ATCC BAA-589 / NCTC 13251).